The sequence spans 879 residues: Alanine--tRNA ligase (879 aa).

4 residues coordinate Zn(2+): His566, His570, Cys668, and His672.

The protein belongs to the class-II aminoacyl-tRNA synthetase family. It depends on Zn(2+) as a cofactor.

The protein resides in the cytoplasm. The enzyme catalyses tRNA(Ala) + L-alanine + ATP = L-alanyl-tRNA(Ala) + AMP + diphosphate. In terms of biological role, catalyzes the attachment of alanine to tRNA(Ala) in a two-step reaction: alanine is first activated by ATP to form Ala-AMP and then transferred to the acceptor end of tRNA(Ala). Also edits incorrectly charged Ser-tRNA(Ala) and Gly-tRNA(Ala) via its editing domain. This Oceanobacillus iheyensis (strain DSM 14371 / CIP 107618 / JCM 11309 / KCTC 3954 / HTE831) protein is Alanine--tRNA ligase.